A 213-amino-acid chain; its full sequence is Na(+)-translocating NADH-quinone reductase subunit D (213 aa).

6 helical membrane-spanning segments follow: residues 22-42, 43-63, 77-97, 101-121, 131-151, and 183-203; these read LIAI…TTAL, TMGF…SLLR, IIIS…FFTI, LSVF…AESM, FLDG…ISII, and LGLM…IWIV.

The protein belongs to the NqrDE/RnfAE family. In terms of assembly, composed of six subunits; NqrA, NqrB, NqrC, NqrD, NqrE and NqrF.

It localises to the cell inner membrane. It catalyses the reaction a ubiquinone + n Na(+)(in) + NADH + H(+) = a ubiquinol + n Na(+)(out) + NAD(+). In terms of biological role, NQR complex catalyzes the reduction of ubiquinone-1 to ubiquinol by two successive reactions, coupled with the transport of Na(+) ions from the cytoplasm to the periplasm. NqrA to NqrE are probably involved in the second step, the conversion of ubisemiquinone to ubiquinol. The sequence is that of Na(+)-translocating NADH-quinone reductase subunit D from Chlamydia trachomatis serovar L2 (strain ATCC VR-902B / DSM 19102 / 434/Bu).